We begin with the raw amino-acid sequence, 299 residues long: Pyridoxal 5'-phosphate synthase subunit PdxS (299 aa).

Asp-24 is a binding site for D-ribose 5-phosphate. Lys-81 acts as the Schiff-base intermediate with D-ribose 5-phosphate in catalysis. A D-ribose 5-phosphate-binding site is contributed by Gly-153. Arg-165 provides a ligand contact to D-glyceraldehyde 3-phosphate. Residues Gly-219 and 240-241 (GS) each bind D-ribose 5-phosphate.

This sequence belongs to the PdxS/SNZ family. As to quaternary structure, in the presence of PdxT, forms a dodecamer of heterodimers.

The enzyme catalyses aldehydo-D-ribose 5-phosphate + D-glyceraldehyde 3-phosphate + L-glutamine = pyridoxal 5'-phosphate + L-glutamate + phosphate + 3 H2O + H(+). The protein operates within cofactor biosynthesis; pyridoxal 5'-phosphate biosynthesis. Catalyzes the formation of pyridoxal 5'-phosphate from ribose 5-phosphate (RBP), glyceraldehyde 3-phosphate (G3P) and ammonia. The ammonia is provided by the PdxT subunit. Can also use ribulose 5-phosphate and dihydroxyacetone phosphate as substrates, resulting from enzyme-catalyzed isomerization of RBP and G3P, respectively. The polypeptide is Pyridoxal 5'-phosphate synthase subunit PdxS (Methanococcus maripaludis (strain DSM 14266 / JCM 13030 / NBRC 101832 / S2 / LL)).